The following is a 310-amino-acid chain: Pantoate--beta-alanine ligase (310 aa).

ATP is bound at residue 32–39 (MGYLHEGH). Residue His39 is the Proton donor of the active site. Residue Gln63 participates in (R)-pantoate binding. Gln63 is a binding site for beta-alanine. 175–178 (GKKD) contacts ATP. Residue Gln181 coordinates (R)-pantoate. Residue 212–215 (MSSR) coordinates ATP.

It belongs to the pantothenate synthetase family. In terms of assembly, homodimer. In terms of tissue distribution, expressed in roots, cotyledons, leaves, stems, cauline leaves, stigma, sepals and petals.

It is found in the cytoplasm. Its subcellular location is the cytosol. The catalysed reaction is (R)-pantoate + beta-alanine + ATP = (R)-pantothenate + AMP + diphosphate + H(+). Its pathway is cofactor biosynthesis; (R)-pantothenate biosynthesis; (R)-pantothenate from (R)-pantoate and beta-alanine: step 1/1. Its activity is regulated as follows. Enzyme kinetics do not match Michaelis-Menten kinetics, suggesting allosteric behavior. Inhibited by high pantoate levels. Catalyzes the condensation of pantoate with beta-alanine to form pantothenate. Essential for panthotenate biosynthesis. The sequence is that of Pantoate--beta-alanine ligase from Arabidopsis thaliana (Mouse-ear cress).